The chain runs to 131 residues: MLIGVGTDIVQIPRIEKILHLYPELFAKKILASKELKQFALLGKINHAAFLAKRFAAKEAVSKAFGVGIGQGINFKDITILNNDLGKPIVEVSSNYTNTLSPFNIHLSLADDYPVCVAFAVIESSYNVILG.

Mg(2+) contacts are provided by Asp8 and Glu59.

It belongs to the P-Pant transferase superfamily. AcpS family. The cofactor is Mg(2+).

Its subcellular location is the cytoplasm. The enzyme catalyses apo-[ACP] + CoA = holo-[ACP] + adenosine 3',5'-bisphosphate + H(+). Transfers the 4'-phosphopantetheine moiety from coenzyme A to a Ser of acyl-carrier-protein. The protein is Holo-[acyl-carrier-protein] synthase of Rickettsia africae (strain ESF-5).